Consider the following 330-residue polypeptide: Aspartate--ammonia ligase (330 aa).

This sequence belongs to the class-II aminoacyl-tRNA synthetase family. AsnA subfamily.

The protein resides in the cytoplasm. It carries out the reaction L-aspartate + NH4(+) + ATP = L-asparagine + AMP + diphosphate + H(+). It participates in amino-acid biosynthesis; L-asparagine biosynthesis; L-asparagine from L-aspartate (ammonia route): step 1/1. This Haemophilus ducreyi (strain 35000HP / ATCC 700724) protein is Aspartate--ammonia ligase.